Reading from the N-terminus, the 462-residue chain is Runt-related transcription factor 1 (462 aa).

Residues 1-27 form a disordered region; sequence MRIPVDTSTSRRFTPPSTTLSPGKMSE. Positions 7-22 are enriched in low complexity; sequence TSTSRRFTPPSTTLSP. The region spanning 50–178 is the Runt domain; it reads NMVEVLSDHP…TVDGPREPRR (129 aa). Residues 80-84 are interaction with DNA; that stretch reads RCNKT. The chloride site is built by asparagine 112, glutamate 116, arginine 139, and valine 170. Interaction with DNA stretches follow at residues 135–143 and 168–177; these read RFVGRSGRG and ITVDGPREPR. A disordered region spans residues 399–462; that stretch reads MMSGGERSPP…RLEEAVWRPY (64 aa). 2 stretches are compositionally biased toward polar residues: residues 415–433 and 440–450; these read TNAS…NQSD and SHSNSPTNMGS. The span at 453–462 shows a compositional bias: basic and acidic residues; sequence RLEEAVWRPY.

As to quaternary structure, heterodimer with cbfb. runx1 binds DNA as a monomer and through the Runt domain. DNA-binding is increased by heterodimerization. In terms of tissue distribution, shows a complex and dynamic expression pattern. In stage 14-24 embryos, expressed in a subset of neuroblasts in the lateral stripe of the neural plate. In late neurula stages, expression begins in the olfactory placodes. Also expressed in structures that play a role in blood formation: at stage 14, expressed on the anterior ventral side of the embryo in the anterior endomesoderm. As the embryo elongates, expression shifts gradually to a V-shaped expression pattern in the presumptive ventral blood island.

Its subcellular location is the nucleus. Functionally, involved in primitive hematopoiesis in the embryo. The sequence is that of Runt-related transcription factor 1 from Xenopus laevis (African clawed frog).